The following is a 242-amino-acid chain: UPF0246 protein SP_1547 (242 aa).

This sequence belongs to the UPF0246 family.

This chain is UPF0246 protein SP_1547, found in Streptococcus pneumoniae serotype 4 (strain ATCC BAA-334 / TIGR4).